The primary structure comprises 169 residues: ATP synthase subunit b (169 aa).

A helical transmembrane segment spans residues 14 to 34 (TFLAMLISFLILVFILQQVAF).

Belongs to the ATPase B chain family. In terms of assembly, F-type ATPases have 2 components, F(1) - the catalytic core - and F(0) - the membrane proton channel. F(1) has five subunits: alpha(3), beta(3), gamma(1), delta(1), epsilon(1). F(0) has four main subunits: a(1), b(2) and c(10-14). The alpha and beta chains form an alternating ring which encloses part of the gamma chain. F(1) is attached to F(0) by a central stalk formed by the gamma and epsilon chains, while a peripheral stalk is formed by the delta and b chains.

It is found in the cell membrane. In terms of biological role, f(1)F(0) ATP synthase produces ATP from ADP in the presence of a proton or sodium gradient. F-type ATPases consist of two structural domains, F(1) containing the extramembraneous catalytic core and F(0) containing the membrane proton channel, linked together by a central stalk and a peripheral stalk. During catalysis, ATP synthesis in the catalytic domain of F(1) is coupled via a rotary mechanism of the central stalk subunits to proton translocation. Its function is as follows. Component of the F(0) channel, it forms part of the peripheral stalk, linking F(1) to F(0). The sequence is that of ATP synthase subunit b from Heliobacterium modesticaldum (strain ATCC 51547 / Ice1).